The sequence spans 89 residues: Large ribosomal subunit protein uL23cz/uL23cy (89 aa).

This sequence belongs to the universal ribosomal protein uL23 family. In terms of assembly, part of the 50S ribosomal subunit.

It is found in the plastid. Its subcellular location is the chloroplast. Functionally, binds to 23S rRNA. This Pelargonium hortorum (Common geranium) protein is Large ribosomal subunit protein uL23cz/uL23cy (rpl23-A).